Here is a 210-residue protein sequence, read N- to C-terminus: MIAILDYGMGNIHSCLKAVSLYTKDFVFTKDHSTIENSKALILPGDGHFDKAMENLNSTGLRKTIDKHVTSGKPLFGICIGFQILFESSEEIAQGSKKEQIEGLGYIKGKIKKFHGKDFKVPHIGWNRLQIRRKDKSVLLKGIGDQSFFYFIHSYRPTDAEGNAITGLCDYYQEKFPAVVEKNNIFGTQFHPEKSHTHGLKLLENFIRFI.

Positions 1 to 210 constitute a Glutamine amidotransferase type-1 domain; the sequence is MIAILDYGMG…KLLENFIRFI (210 aa). Cys79 acts as the Nucleophile in catalysis. Active-site residues include His191 and Glu193.

In terms of assembly, heterodimer of HisH and HisF.

Its subcellular location is the cytoplasm. The catalysed reaction is 5-[(5-phospho-1-deoxy-D-ribulos-1-ylimino)methylamino]-1-(5-phospho-beta-D-ribosyl)imidazole-4-carboxamide + L-glutamine = D-erythro-1-(imidazol-4-yl)glycerol 3-phosphate + 5-amino-1-(5-phospho-beta-D-ribosyl)imidazole-4-carboxamide + L-glutamate + H(+). It carries out the reaction L-glutamine + H2O = L-glutamate + NH4(+). It functions in the pathway amino-acid biosynthesis; L-histidine biosynthesis; L-histidine from 5-phospho-alpha-D-ribose 1-diphosphate: step 5/9. Functionally, IGPS catalyzes the conversion of PRFAR and glutamine to IGP, AICAR and glutamate. The HisH subunit catalyzes the hydrolysis of glutamine to glutamate and ammonia as part of the synthesis of IGP and AICAR. The resulting ammonia molecule is channeled to the active site of HisF. In Leptospira interrogans serogroup Icterohaemorrhagiae serovar copenhageni (strain Fiocruz L1-130), this protein is Imidazole glycerol phosphate synthase subunit HisH.